Reading from the N-terminus, the 62-residue chain is Photosystem II reaction center protein Z (62 aa).

M1 carries the N-formylmethionine modification. Residues 1 to 4 (MTIL) lie on the Lumenal side of the membrane. The chain crosses the membrane as a helical span at residues 5-25 (FQLALAALVILSFVMVIGVPV). Over 26–36 (AYASPQDWDRS) the chain is Cytoplasmic. A helical membrane pass occupies residues 37–58 (KQLIFLGSGLWIALVLVVGVLN). The Lumenal portion of the chain corresponds to 59–62 (FFVV).

This sequence belongs to the PsbZ family. In terms of assembly, PSII is composed of 1 copy each of membrane proteins PsbA, PsbB, PsbC, PsbD, PsbE, PsbF, PsbH, PsbI, PsbJ, PsbK, PsbL, PsbM, PsbT, PsbX, PsbY, PsbZ, Psb30/Ycf12, peripheral proteins PsbO, CyanoQ (PsbQ), PsbU, PsbV and a large number of cofactors. It forms dimeric complexes. Part of a photosystem II (PSII) assembly intermediate complex PSII-I; crystallized from a strain deleted of psbJ, it forms monomeric PSII before addition of the oxygen evolving complex. PSII-I includes 3 assembly factors not found in mature PSII (Psb27, Psb28 and Psb34). The cofactor is PSII binds multiple chlorophylls, carotenoids and specific lipids..

It is found in the cellular thylakoid membrane. Functionally, may control the interaction of photosystem II (PSII) cores with the light-harvesting antenna, regulates electron flow through the 2 photosystem reaction centers. PSII is a light-driven water plastoquinone oxidoreductase, using light energy to abstract electrons from H(2)O, generating a proton gradient subsequently used for ATP formation. Its function is as follows. May also aid in binding of PsbK, Psb30/Ycf12 and the oxygen-evolving complex to PSII, at least in vitro. In Thermosynechococcus vestitus (strain NIES-2133 / IAM M-273 / BP-1), this protein is Photosystem II reaction center protein Z.